Reading from the N-terminus, the 1381-residue chain is DNA-directed RNA polymerase subunit beta'' (1381 aa).

Residues Cys-224, Cys-295, Cys-302, and Cys-305 each coordinate Zn(2+).

This sequence belongs to the RNA polymerase beta' chain family. RpoC2 subfamily. As to quaternary structure, in plastids the minimal PEP RNA polymerase catalytic core is composed of four subunits: alpha, beta, beta', and beta''. When a (nuclear-encoded) sigma factor is associated with the core the holoenzyme is formed, which can initiate transcription. The cofactor is Zn(2+).

It localises to the plastid. Its subcellular location is the chloroplast. It catalyses the reaction RNA(n) + a ribonucleoside 5'-triphosphate = RNA(n+1) + diphosphate. Functionally, DNA-dependent RNA polymerase catalyzes the transcription of DNA into RNA using the four ribonucleoside triphosphates as substrates. This is DNA-directed RNA polymerase subunit beta'' from Guizotia abyssinica (Niger).